The following is a 543-amino-acid chain: Acrosin-binding protein (543 aa).

A signal peptide spans 1–25; it reads MGQPAAGSILTLLRVLLLPLGPALA. Residues 26–106 are pro-ACR binding; the sequence is QDSPSAPTPG…ASWFESFCQF (81 aa). Residues 26–276 constitute a propeptide, removed in mature form; it reads QDSPSAPTPG…DPHSFTARVR (251 aa). A disordered region spans residues 187-239; sequence AGQEQAAGHKQEQGQEQHKQDPTQEHKQDDGQEQEEQEEEQEEEGKQEEGQSV. The segment covering 193 to 216 has biased composition (basic and acidic residues); it reads AGHKQEQGQEQHKQDPTQEHKQDD. Residues 217 to 232 show a composition bias toward acidic residues; sequence GQEQEEQEEEQEEEGK. Residues 319-427 are pro-ACR binding; it reads LPHKEALLVL…TQAGTSESGR (109 aa).

Binds proacrosin (ACR). Does not bind the mature form of ACR. The N-terminus is blocked. Post-translationally, phosphorylated on Tyr residues in capacitated sperm. In terms of processing, synthesized as a 60-kDa precursor, the 32-kDa mature form is post-translationally produced by the removal of the N-terminal half of the precursor during sperm maturation in the testis and/or epididymis. Specifically expressed in testis.

It is found in the secreted. It localises to the cytoplasmic vesicle. The protein localises to the secretory vesicle. Its subcellular location is the acrosome. Acrosomal protein that maintains proacrosin (pro-ACR) as an enzymatically inactive zymogen in the acrosome. Involved also in the acrosome formation. This is Acrosin-binding protein (ACRBP) from Cavia porcellus (Guinea pig).